The sequence spans 315 residues: Fucose-specific lectin (315 aa).

Repeat copies occupy residues 2 to 53 (STPG…KNVI), 54 to 103 (GNAK…GGAK), 104 to 155 (FQVA…LGGA), 156 to 207 (LPGT…TIFD), 208 to 260 (RAPP…ITPV), and 261 to 315 (IQGS…LPPA). The interval 2-315 (STPGAQQVLF…QLGRSALPPA (314 aa)) is 6 X approximate tandem repeats. Positions 25, 37, 44, 73, 85, 94, 98, 126, 138, 146, 150, 177, 189, 198, 230, and 242 each coordinate alpha-L-fucose. Cys-244, Asp-246, and His-252 together coordinate Zn(2+). Residues Arg-282 and Glu-296 each contribute to the alpha-L-fucose site.

Belongs to the fungal fucose-specific lectin family. In terms of assembly, homodimer.

Its function is as follows. Multispecific lectin that is able to recognize L-fucose in all possible linkages. These could be found not only in decomposed plant matter in soil, which is the natural environment for A.fumigatus, but also in various epitopes on human tissues. Mediates binding of A.fumigatus conidia to airway mucin in a fucose dependent manner. Stimulates IL-8 production by human bronchial cells in a dose-dependent manner, contributing to the inflammatory response observed upon the exposure of a patient to A.fumigatus, and thus might be an important virulence factor involved in an early stage of A.fumigatus infection. This Aspergillus fumigatus (strain ATCC MYA-4609 / CBS 101355 / FGSC A1100 / Af293) (Neosartorya fumigata) protein is Fucose-specific lectin.